The following is a 305-amino-acid chain: Translation initiation factor eIF2B subunit alpha (305 aa).

Lys-35 carries the post-translational modification N6-acetyllysine.

It belongs to the eIF-2B alpha/beta/delta subunits family. As to quaternary structure, component of the translation initiation factor 2B (eIF2B) complex which is a heterodecamer of two sets of five different subunits: alpha, beta, gamma, delta and epsilon. Subunits alpha, beta and delta comprise a regulatory subcomplex and subunits epsilon and gamma comprise a catalytic subcomplex. Within the complex, the hexameric regulatory complex resides at the center, with the two heterodimeric catalytic subcomplexes bound on opposite sides.

It localises to the cytoplasm. The protein localises to the cytosol. Activated by the chemical integrated stress response (ISR) inhibitor ISRIB which stimulates guanine nucleotide exchange factor activity for both phosphorylated and unphosphorylated eIF2. Functionally, acts as a component of the translation initiation factor 2B (eIF2B) complex, which catalyzes the exchange of GDP for GTP on eukaryotic initiation factor 2 (eIF2) gamma subunit. Its guanine nucleotide exchange factor activity is repressed when bound to eIF2 complex phosphorylated on the alpha subunit, thereby limiting the amount of methionyl-initiator methionine tRNA available to the ribosome and consequently global translation is repressed. This Macaca fascicularis (Crab-eating macaque) protein is Translation initiation factor eIF2B subunit alpha (EIF2B1).